A 489-amino-acid chain; its full sequence is N-succinylglutamate 5-semialdehyde dehydrogenase (489 aa).

224–229 lines the NAD(+) pocket; it reads GSAKVG. Catalysis depends on residues Glu-247 and Cys-281.

Belongs to the aldehyde dehydrogenase family. AstD subfamily.

It carries out the reaction N-succinyl-L-glutamate 5-semialdehyde + NAD(+) + H2O = N-succinyl-L-glutamate + NADH + 2 H(+). It participates in amino-acid degradation; L-arginine degradation via AST pathway; L-glutamate and succinate from L-arginine: step 4/5. In terms of biological role, catalyzes the NAD-dependent reduction of succinylglutamate semialdehyde into succinylglutamate. The protein is N-succinylglutamate 5-semialdehyde dehydrogenase of Chromohalobacter salexigens (strain ATCC BAA-138 / DSM 3043 / CIP 106854 / NCIMB 13768 / 1H11).